The sequence spans 256 residues: DNA repair protein RecO (256 aa).

It belongs to the RecO family.

Involved in DNA repair and RecF pathway recombination. The protein is DNA repair protein RecO of Bacillus pumilus (strain SAFR-032).